Here is a 470-residue protein sequence, read N- to C-terminus: MNPNQKIITIGSVSIVLTTVGLLLQITSLCSIWFSHYNQVTQTNGQPCSNDTINYYNETFVNVTNVQNNYTTITEPSIPQAIHYSSGRDLCPVKGWAPLSKDNGIRIGSRGEVFVIREPFISCSINECRTFFLTQGALLNDKHSNGTVKDRSPFRTLMSCPIGVAPSPSNSRFESVAWSATACSDGPGWLTLGITGPDTTAVAVLKYNGVITDTLKSWKGNIMRTQESECVCQDEFCYTLVTDGPSDAQAFYKILKIKKGKIVGAKDVDATGFHFEECSCYPSGENVECVCRDNWRGSNRPWIRFNSDLDYQIGYVCSGVFGDNPRPVDGTGSCNSPVNNGKGRYGVKGFSFRYGDGVWIGRTKSLESRSGFEMVWDANGWVSTDKDSNGVQDIIDNDNWSGYSGSFSIRGETTGRNCTVPCFWVEMIRGQPKEKTIWTSGSSIAFCGVNSDTTSWSWPDGALLPFDIDK.

The Intravirion portion of the chain corresponds to 1-6 (MNPNQK). The helical transmembrane segment at 7–29 (IITIGSVSIVLTTVGLLLQITSL) threads the bilayer. An involved in apical transport and lipid raft association region spans residues 11-33 (GSVSIVLTTVGLLLQITSLCSIW). The Virion surface segment spans residues 30-470 (CSIWFSHYNQ…GALLPFDIDK (441 aa)). The interval 36–88 (HYNQVTQTNGQPCSNDTINYYNETFVNVTNVQNNYTTITEPSIPQAIHYSSGR) is hypervariable stalk region. N-linked (GlcNAc...) asparagine; by host glycosylation is found at Asn50, Asn57, Asn62, and Asn69. The tract at residues 90–470 (LCPVKGWAPL…GALLPFDIDK (381 aa)) is head of neuraminidase. 8 disulfide bridges follow: Cys91-Cys418, Cys123-Cys128, Cys183-Cys230, Cys232-Cys237, Cys278-Cys291, Cys280-Cys289, Cys317-Cys334, and Cys422-Cys447. Residue Arg117 participates in substrate binding. N-linked (GlcNAc...) asparagine; by host glycosylation occurs at Asn145. Asp150 serves as the catalytic Proton donor/acceptor. Arg151 lines the substrate pocket. 276–277 (EE) lines the substrate pocket. Residue Arg292 coordinates substrate. Asp293, Gly297, and Asp323 together coordinate Ca(2+). Arg369 contacts substrate. N-linked (GlcNAc...) asparagine; by host glycosylation is present at Asn399. Tyr403 serves as the catalytic Nucleophile. N-linked (GlcNAc...) asparagine; by host glycosylation is present at Asn417.

It belongs to the glycosyl hydrolase 34 family. Homotetramer. Ca(2+) is required as a cofactor. Post-translationally, N-glycosylated.

The protein localises to the virion membrane. The protein resides in the host apical cell membrane. The catalysed reaction is Hydrolysis of alpha-(2-&gt;3)-, alpha-(2-&gt;6)-, alpha-(2-&gt;8)- glycosidic linkages of terminal sialic acid residues in oligosaccharides, glycoproteins, glycolipids, colominic acid and synthetic substrates.. With respect to regulation, inhibited by the neuraminidase inhibitors zanamivir (Relenza) and oseltamivir (Tamiflu). These drugs interfere with the release of progeny virus from infected cells and are effective against all influenza strains. Resistance to neuraminidase inhibitors is quite rare. Its function is as follows. Catalyzes the removal of terminal sialic acid residues from viral and cellular glycoconjugates. Cleaves off the terminal sialic acids on the glycosylated HA during virus budding to facilitate virus release. Additionally helps virus spread through the circulation by further removing sialic acids from the cell surface. These cleavages prevent self-aggregation and ensure the efficient spread of the progeny virus from cell to cell. Otherwise, infection would be limited to one round of replication. Described as a receptor-destroying enzyme because it cleaves a terminal sialic acid from the cellular receptors. May facilitate viral invasion of the upper airways by cleaving the sialic acid moieties on the mucin of the airway epithelial cells. Likely to plays a role in the budding process through its association with lipid rafts during intracellular transport. May additionally display a raft-association independent effect on budding. Plays a role in the determination of host range restriction on replication and virulence. Sialidase activity in late endosome/lysosome traffic seems to enhance virus replication. The chain is Neuraminidase from Aves.